Consider the following 711-residue polypeptide: DNA topoisomerase 3 (711 aa).

The Toprim domain occupies 2–135 (KSLILAEKPS…IRRLWISSVT (134 aa)). Mg(2+) is bound by residues Glu-8 and Asp-104. The Topo IA-type catalytic domain occupies 152–580 (YNDLYYAALA…EMKDFTKDVV (429 aa)). The tract at residues 186-191 (SLGRVQ) is interaction with DNA. Residue Tyr-305 is the O-(5'-phospho-DNA)-tyrosine intermediate of the active site. The disordered stretch occupies residues 691–711 (MNKNEGLDNNPFKDALKNLNL).

This sequence belongs to the type IA topoisomerase family. Mg(2+) serves as cofactor.

The enzyme catalyses ATP-independent breakage of single-stranded DNA, followed by passage and rejoining.. Functionally, releases the supercoiling and torsional tension of DNA, which is introduced during the DNA replication and transcription, by transiently cleaving and rejoining one strand of the DNA duplex. Introduces a single-strand break via transesterification at a target site in duplex DNA. The scissile phosphodiester is attacked by the catalytic tyrosine of the enzyme, resulting in the formation of a DNA-(5'-phosphotyrosyl)-enzyme intermediate and the expulsion of a 3'-OH DNA strand. The free DNA strand then undergoes passage around the unbroken strand, thus removing DNA supercoils. Finally, in the religation step, the DNA 3'-OH attacks the covalent intermediate to expel the active-site tyrosine and restore the DNA phosphodiester backbone. In Staphylococcus aureus (strain NCTC 8325 / PS 47), this protein is DNA topoisomerase 3.